A 455-amino-acid polypeptide reads, in one-letter code: Argininosuccinate lyase (455 aa).

This sequence belongs to the lyase 1 family. Argininosuccinate lyase subfamily.

Its subcellular location is the cytoplasm. It catalyses the reaction 2-(N(omega)-L-arginino)succinate = fumarate + L-arginine. It functions in the pathway amino-acid biosynthesis; L-arginine biosynthesis; L-arginine from L-ornithine and carbamoyl phosphate: step 3/3. The polypeptide is Argininosuccinate lyase (Shewanella baltica (strain OS223)).